Here is a 383-residue protein sequence, read N- to C-terminus: uncharacterized protein (383 aa).

A signal peptide spans 1-23 (MKLTSIPIASTLLSLLAASGTLA).

Belongs to the but2 family.

It is found in the cytoplasm. The protein localises to the nucleus. This is an uncharacterized protein from Schizosaccharomyces pombe (strain 972 / ATCC 24843) (Fission yeast).